We begin with the raw amino-acid sequence, 802 residues long: MVSVNGVPAARLPVTLPGEDRASRKAPDYLMVEQPPFDELMYTIGETIELSCAAEDASTTTKWCKDGIGIVPNNRTSTRQGLLKIINVSSDDSGIYSCRLWHSTEILRNFTIRVTDLPSSGDDEDDDDDDDDETEDREPPRWTQPERMEKKLIAVPAANTIRFRCPAAGNPTPTIHWLKNGKEFRGEHRIGGIKLRHQQWSLVMESVVPSDKGNYTCVVENKYGSIRQTYQLDVLERSSHRPILQAGLPGNQTVVLGSDVEFHCKVYSDAQPHIQWLKHVEVNGSKYGPDGDPYVSVLQSFINGTEVDSTLSLKNVTETNEGQYVCRANNFIGVAEASFWLHIYKPAPAEPVEKALTTSSSSITVLIVVTSTIVFILLVIIVITHLMKVPSKKSMTAPPVHKVSKFPLKRQQVSLESNSSMNSNTPLVRITHLSSSDGTMLANVSELGLPLDPKWELLRSRLTLGKPLGEGCFGQVVMAEAIGIDKERPNKPATVAVKMLKDDATDKDLSDLVSEMEMMKMIGKHKNIINLLGACTQDGPLYVLVEYASKGSLREYLKARRPPGMDYSFDACKIPAEQLTFKDLVSCAYQVARGMEYLASQKCIHRDLAARNVLVTDDNVMKIADFGLARDIHNIDYYKKTTNGRLPVKWMAPEALFDRIYTHHSDVWSYGVLLWEIFTLGGSPYPGIPVEELFKLLKEGHRMDKPANCTHELYMIMRECWHAVPSQRPAFKQLVEDLDRVLTVTSTNEYLDLSVAFEQYSPPSQDSHSTCSSGDDSVFAHDILPDEPCLPKHQQHNGAIPT.

In terms of domain architecture, Ig-like C2-type 1 spans 27–115; that stretch reads PDYLMVEQPP…ILRNFTIRVT (89 aa). A disulfide bridge links Cys52 with Cys98. 3 N-linked (GlcNAc...) asparagine glycosylation sites follow: Asn74, Asn87, and Asn109. The segment at 116–148 is disordered; sequence DLPSSGDDEDDDDDDDDETEDREPPRWTQPERM. The segment covering 121–136 has biased composition (acidic residues); the sequence is GDDEDDDDDDDDETED. Over residues 137–148 the composition is skewed to basic and acidic residues; that stretch reads REPPRWTQPERM. 2 consecutive Ig-like C2-type domains span residues 140–233 and 242–342; these read PRWT…YQLD and PILQ…FWLH. A disulfide bridge links Cys165 with Cys217. Residues Asn214, Asn251, Asn283, Asn303, and Asn315 are each glycosylated (N-linked (GlcNAc...) asparagine). The cysteines at positions 264 and 326 are disulfide-linked. The helical transmembrane segment at 363–383 threads the bilayer; that stretch reads ITVLIVVTSTIVFILLVIIVI. Over 384–802 the chain is Cytoplasmic; sequence THLMKVPSKK…HQQHNGAIPT (419 aa). Residues 462-751 enclose the Protein kinase domain; sequence LTLGKPLGEG…LTVTSTNEYL (290 aa). Residues 468-476 and Lys498 each bind ATP; that span reads LGEGCFGQV. Asp607 serves as the catalytic Proton acceptor. 4 positions are modified to phosphotyrosine; by autocatalysis: Tyr637, Tyr638, Tyr714, and Tyr750.

It belongs to the protein kinase superfamily. Tyr protein kinase family. Fibroblast growth factor receptor subfamily. As to quaternary structure, monomer. Homodimer after ligand binding. In terms of processing, autophosphorylated. Binding of FGF family members together with heparan sulfate proteoglycan or heparin promotes receptor dimerization and autophosphorylation on tyrosine residues. Autophosphorylation occurs in trans between the two FGFR molecules present in the dimer.

It is found in the cell membrane. The catalysed reaction is L-tyrosyl-[protein] + ATP = O-phospho-L-tyrosyl-[protein] + ADP + H(+). Its activity is regulated as follows. Present in an inactive conformation in the absence of bound ligand. Ligand binding leads to dimerization and activation by autophosphorylation on tyrosine residues. Its function is as follows. Tyrosine-protein kinase that acts as a cell-surface receptor for fibroblast growth factors and plays an essential role in the regulation of cell proliferation, differentiation and apoptosis. Plays an essential role in the regulation of chondrocyte differentiation, proliferation and apoptosis, and is required for normal skeleton development. Regulates both osteogenesis and postnatal bone mineralization by osteoblasts. Promotes apoptosis in chondrocytes, but can also promote cancer cell proliferation. Phosphorylates PLCG1, CBL and FRS2. Ligand binding leads to the activation of several signaling cascades. Activation of PLCG1 leads to the production of the cellular signaling molecules diacylglycerol and inositol 1,4,5-trisphosphate. Phosphorylation of FRS2 triggers recruitment of GRB2, GAB1, PIK3R1 and SOS1, and mediates activation of RAS, MAPK1/ERK2, MAPK3/ERK1 and the MAP kinase signaling pathway, as well as of the AKT1 signaling pathway. In Xenopus laevis (African clawed frog), this protein is Fibroblast growth factor receptor 3 (fgfr3).